A 59-amino-acid chain; its full sequence is Protein translocase subunit SecE (59 aa).

The helical transmembrane segment at 39 to 59 threads the bilayer; the sequence is VMALFLGLIDALFVALLSFFF.

The protein belongs to the SecE/SEC61-gamma family. In terms of assembly, component of the Sec protein translocase complex. Heterotrimer consisting of SecY, SecE and SecG subunits. The heterotrimers can form oligomers, although 1 heterotrimer is thought to be able to translocate proteins. Interacts with the ribosome. Interacts with SecDF, and other proteins may be involved. Interacts with SecA.

The protein localises to the cell inner membrane. In terms of biological role, essential subunit of the Sec protein translocation channel SecYEG. Clamps together the 2 halves of SecY. May contact the channel plug during translocation. The protein is Protein translocase subunit SecE of Treponema pallidum (strain Nichols).